The primary structure comprises 100 residues: Small ribosomal subunit protein uS14 (100 aa).

This sequence belongs to the universal ribosomal protein uS14 family. In terms of assembly, part of the 30S ribosomal subunit. Contacts proteins S3 and S10.

Binds 16S rRNA, required for the assembly of 30S particles and may also be responsible for determining the conformation of the 16S rRNA at the A site. This Prochlorococcus marinus (strain MIT 9303) protein is Small ribosomal subunit protein uS14.